A 61-amino-acid chain; its full sequence is Probable tautomerase lin2709 (61 aa).

Residue Pro2 is the Proton acceptor; via imino nitrogen of the active site.

The protein belongs to the 4-oxalocrotonate tautomerase family.

This is Probable tautomerase lin2709 from Listeria innocua serovar 6a (strain ATCC BAA-680 / CLIP 11262).